Reading from the N-terminus, the 360-residue chain is Phosphoserine aminotransferase (360 aa).

Arginine 42 lines the L-glutamate pocket. Residues tryptophan 102, threonine 152, aspartate 171, and glutamine 194 each coordinate pyridoxal 5'-phosphate. Lysine 195 is subject to N6-(pyridoxal phosphate)lysine. Residue asparagine 237–threonine 238 participates in pyridoxal 5'-phosphate binding.

The protein belongs to the class-V pyridoxal-phosphate-dependent aminotransferase family. SerC subfamily. In terms of assembly, homodimer. It depends on pyridoxal 5'-phosphate as a cofactor.

The protein resides in the cytoplasm. It carries out the reaction O-phospho-L-serine + 2-oxoglutarate = 3-phosphooxypyruvate + L-glutamate. The enzyme catalyses 4-(phosphooxy)-L-threonine + 2-oxoglutarate = (R)-3-hydroxy-2-oxo-4-phosphooxybutanoate + L-glutamate. It participates in amino-acid biosynthesis; L-serine biosynthesis; L-serine from 3-phospho-D-glycerate: step 2/3. Its pathway is cofactor biosynthesis; pyridoxine 5'-phosphate biosynthesis; pyridoxine 5'-phosphate from D-erythrose 4-phosphate: step 3/5. Catalyzes the reversible conversion of 3-phosphohydroxypyruvate to phosphoserine and of 3-hydroxy-2-oxo-4-phosphonooxybutanoate to phosphohydroxythreonine. In Coxiella burnetii (strain RSA 331 / Henzerling II), this protein is Phosphoserine aminotransferase.